Here is a 353-residue protein sequence, read N- to C-terminus: GTPase Obg (353 aa).

The Obg domain maps to 1–159; the sequence is MKFIDEATIK…FELYLELKVL (159 aa). The 173-residue stretch at 160 to 332 folds into the OBG-type G domain; sequence ADVGLLGMPN…LTYAIMEHVE (173 aa). GTP-binding positions include 166–173, 191–195, 213–216, 284–287, and 313–315; these read GMPNAGKS, FTTLH, DVPG, NKVD, and SAL. Mg(2+) is bound by residues serine 173 and threonine 193.

This sequence belongs to the TRAFAC class OBG-HflX-like GTPase superfamily. OBG GTPase family. In terms of assembly, monomer. It depends on Mg(2+) as a cofactor.

Its subcellular location is the cytoplasm. In terms of biological role, an essential GTPase which binds GTP, GDP and possibly (p)ppGpp with moderate affinity, with high nucleotide exchange rates and a fairly low GTP hydrolysis rate. Plays a role in control of the cell cycle, stress response, ribosome biogenesis and in those bacteria that undergo differentiation, in morphogenesis control. This Methylobacillus flagellatus (strain ATCC 51484 / DSM 6875 / VKM B-1610 / KT) protein is GTPase Obg.